Here is a 336-residue protein sequence, read N- to C-terminus: F420-dependent glucose-6-phosphate dehydrogenase (336 aa).

Position 40 (Asp40) interacts with coenzyme F420-(gamma-Glu)n. The active-site Proton donor is the His41. Residues Thr77 and 108 to 109 (TG) contribute to the coenzyme F420-(gamma-Glu)n site. Catalysis depends on Glu110, which acts as the Proton acceptor. Residues Asn113, 176-177 (SG), and 179-180 (AA) contribute to the coenzyme F420-(gamma-Glu)n site. Residues Thr194, Lys197, Lys258, and Arg282 each contribute to the substrate site.

Belongs to the F420-dependent glucose-6-phosphate dehydrogenase family. In terms of assembly, homodimer.

The enzyme catalyses oxidized coenzyme F420-(gamma-L-Glu)(n) + D-glucose 6-phosphate + H(+) = 6-phospho-D-glucono-1,5-lactone + reduced coenzyme F420-(gamma-L-Glu)(n). Its function is as follows. Catalyzes the coenzyme F420-dependent oxidation of glucose 6-phosphate (G6P) to 6-phosphogluconolactone. The protein is F420-dependent glucose-6-phosphate dehydrogenase of Microbacterium testaceum (strain StLB037).